The chain runs to 440 residues: Enolase (440 aa).

(2R)-2-phosphoglycerate is bound at residue Q163. The active-site Proton donor is the E205. The Mg(2+) site is built by D242, E288, and D315. (2R)-2-phosphoglycerate contacts are provided by K340, R369, S370, and K391. The active-site Proton acceptor is the K340.

The protein belongs to the enolase family. Mg(2+) is required as a cofactor.

The protein localises to the cytoplasm. The protein resides in the secreted. It localises to the cell surface. The enzyme catalyses (2R)-2-phosphoglycerate = phosphoenolpyruvate + H2O. Its pathway is carbohydrate degradation; glycolysis; pyruvate from D-glyceraldehyde 3-phosphate: step 4/5. Functionally, catalyzes the reversible conversion of 2-phosphoglycerate (2-PG) into phosphoenolpyruvate (PEP). It is essential for the degradation of carbohydrates via glycolysis. This chain is Enolase, found in Pediococcus pentosaceus (strain ATCC 25745 / CCUG 21536 / LMG 10740 / 183-1w).